The primary structure comprises 485 residues: Ribulose bisphosphate carboxylase large chain 2 (485 aa).

Residues Asn-125 and Thr-175 each coordinate substrate. The active-site Proton acceptor is Lys-177. Lys-179 provides a ligand contact to substrate. Mg(2+) is bound by residues Lys-203, Asp-205, and Glu-206. Position 203 is an N6-carboxylysine (Lys-203). His-295 functions as the Proton acceptor in the catalytic mechanism. Positions 296, 328, and 380 each coordinate substrate.

This sequence belongs to the RuBisCO large chain family. Type I subfamily. As to quaternary structure, heterohexadecamer of 8 large chains and 8 small chains. Requires Mg(2+) as cofactor.

It carries out the reaction 2 (2R)-3-phosphoglycerate + 2 H(+) = D-ribulose 1,5-bisphosphate + CO2 + H2O. The catalysed reaction is D-ribulose 1,5-bisphosphate + O2 = 2-phosphoglycolate + (2R)-3-phosphoglycerate + 2 H(+). RuBisCO catalyzes two reactions: the carboxylation of D-ribulose 1,5-bisphosphate, the primary event in carbon dioxide fixation, as well as the oxidative fragmentation of the pentose substrate. Both reactions occur simultaneously and in competition at the same active site. The chain is Ribulose bisphosphate carboxylase large chain 2 from Methylibium petroleiphilum (strain ATCC BAA-1232 / LMG 22953 / PM1).